Reading from the N-terminus, the 190-residue chain is dTTP/UTP pyrophosphatase (190 aa).

The active-site Proton acceptor is aspartate 70.

Belongs to the Maf family. YhdE subfamily. Requires a divalent metal cation as cofactor.

The protein localises to the cytoplasm. It catalyses the reaction dTTP + H2O = dTMP + diphosphate + H(+). It carries out the reaction UTP + H2O = UMP + diphosphate + H(+). In terms of biological role, nucleoside triphosphate pyrophosphatase that hydrolyzes dTTP and UTP. May have a dual role in cell division arrest and in preventing the incorporation of modified nucleotides into cellular nucleic acids. The chain is dTTP/UTP pyrophosphatase from Paramagnetospirillum magneticum (strain ATCC 700264 / AMB-1) (Magnetospirillum magneticum).